We begin with the raw amino-acid sequence, 78 residues long: Surfactant-associated protein 2 (78 aa).

An N-terminal signal peptide occupies residues 1 to 19; that stretch reads MGAGLPLVLLLTLVGSSQG. An N-linked (GlcNAc...) asparagine glycan is attached at Asn37.

Post-translationally, N-glycosylated.

Its subcellular location is the secreted. The protein resides in the cytoplasmic vesicle. It is found in the secretory vesicle. It localises to the golgi apparatus. Putative surfactant protein. This is Surfactant-associated protein 2 (SFTA2) from Bos taurus (Bovine).